The primary structure comprises 538 residues: Putative cysteine ligase BshC (538 aa).

The stretch at 460-484 forms a coiled coil; that stretch reads KINEQIELLERMLKRNVEKKHEVEL.

The protein belongs to the BshC family.

Functionally, involved in bacillithiol (BSH) biosynthesis. May catalyze the last step of the pathway, the addition of cysteine to glucosamine malate (GlcN-Mal) to generate BSH. The polypeptide is Putative cysteine ligase BshC (Bacillus cereus (strain ATCC 10987 / NRS 248)).